The following is a 452-amino-acid chain: Protein FAM81B (452 aa).

Polar residues-rich tracts occupy residues 1 to 11 and 38 to 55; these read MQLQFLGTLAS and IMSS…TATA. The disordered stretch occupies residues 1-85; sequence MQLQFLGTLA…KVRLSPAKMS (85 aa). 2 coiled-coil regions span residues 164–192 and 329–452; these read IQTI…DQAA and LGHI…LQEV.

Belongs to the FAM81 family.

The chain is Protein FAM81B (FAM81B) from Homo sapiens (Human).